A 232-amino-acid polypeptide reads, in one-letter code: N-acetyltransferase 8B (232 aa).

Topologically, residues 1–62 are cytoplasmic; that stretch reads MPRFEAQKSS…FLLLLGVPLA (62 aa). The chain crosses the membrane as a helical; Signal-anchor for type II membrane protein span at residues 63–83; the sequence is LVLVSGSWILAVICIFFLLLL. The N-acetyltransferase domain maps to 79 to 224; the sequence is FLLLLLRLLA…WRLVDICFIQ (146 aa). Residues 84–232 are Lumenal-facing; it reads LRLLARQPWK…IQLNYSFPSA (149 aa). Lys109 carries the N6-acetyllysine modification.

The protein belongs to the NAT8 family. In terms of processing, acetylation on Lys-109 modulates enzymatic activity. In terms of tissue distribution, expressed in brain (at protein level).

Its subcellular location is the endoplasmic reticulum-Golgi intermediate compartment membrane. It localises to the endoplasmic reticulum membrane. The catalysed reaction is L-lysyl-[protein] + acetyl-CoA = N(6)-acetyl-L-lysyl-[protein] + CoA + H(+). Endoplasmic reticulum (ER)-membrane-bound lysine N-acetyltransferase catalyzing the N6-acetylation of lysine residues in the lumen of the ER in various proteins, including PROM1 and BACE1, using acetyl-CoA as acetyl donor. Thereby, may regulate apoptosis through the acetylation and the regulation of the expression of PROM1. Acetylates and stabilizes BACE1 immature protein, leading to increased steady-state levels in neurons. By acting on BACE1 expression, may regulate amyloid beta-peptide formation. N(6)-lysine acetylation in ER maintains protein homeostasis and regulates reticulophagy. This is N-acetyltransferase 8B from Mus musculus (Mouse).